A 171-amino-acid polypeptide reads, in one-letter code: Neuronal vesicle trafficking-associated protein 2 (171 aa).

The segment at 1-21 (MVKLNGNPGEKGAKPPSVEDG) is disordered. At 1–71 (MVKLNGNPGE…FRVPKIAEFT (71 aa)) the chain is on the cytoplasmic side. The chain crosses the membrane as a helical; Signal-anchor for type II membrane protein span at residues 72–92 (VTILVSLALAFLACIVFLVVY). Residues 93–171 (KAFTYDHSCP…EPKPPKTQGH (79 aa)) are Lumenal-facing.

It belongs to the NSG family.

The protein resides in the membrane. The protein localises to the golgi apparatus. Its subcellular location is the trans-Golgi network membrane. It localises to the cell projection. It is found in the dendrite. The protein resides in the endosome membrane. The protein localises to the early endosome membrane. Its subcellular location is the late endosome membrane. It localises to the lysosome lumen. It is found in the cytoplasmic vesicle membrane. The protein resides in the golgi stack membrane. The protein localises to the endosome. Its subcellular location is the multivesicular body membrane. The protein is Neuronal vesicle trafficking-associated protein 2 of Rattus norvegicus (Rat).